A 404-amino-acid polypeptide reads, in one-letter code: Immediate early response gene 5-like protein (404 aa).

3 disordered regions span residues 86-107, 160-231, and 308-327; these read AADF…EPAA, AALQ…APAS, and QEEE…EPPG. Pro residues predominate over residues 177–194; the sequence is PLQPGPAPLPLPLPPPAP. A compositionally biased stretch (low complexity) spans 195 to 231; sequence AALCPRDPRAPAACSAPPGAAPPAAAASPPASPAPAS. Acidic residues predominate over residues 308-318; the sequence is QEEEEDDEEDA.

The protein belongs to the IER family.

The protein is Immediate early response gene 5-like protein (IER5L) of Homo sapiens (Human).